The following is a 544-amino-acid chain: Probable protein kinase UbiB (544 aa).

One can recognise a Protein kinase domain in the interval 123–505; the sequence is EFDEQALASA…GRQKSHNVRS (383 aa). ATP-binding positions include 129–137 and lysine 156; that span reads LASASIAQV. Aspartate 291 acts as the Proton acceptor in catalysis. The helical transmembrane segment at 522-540 threads the bilayer; it reads LPLWLSCGTLVTVLLVLLL.

The protein belongs to the ABC1 family. UbiB subfamily.

It localises to the cell inner membrane. It participates in cofactor biosynthesis; ubiquinone biosynthesis [regulation]. Is probably a protein kinase regulator of UbiI activity which is involved in aerobic coenzyme Q (ubiquinone) biosynthesis. This Actinobacillus pleuropneumoniae serotype 5b (strain L20) protein is Probable protein kinase UbiB.